The chain runs to 340 residues: GTP 3',8-cyclase (340 aa).

A Radical SAM core domain is found at 8–227; it reads KLGRPIRDLR…TMIEQHFEID (220 aa). Residue Arg-17 coordinates GTP. The [4Fe-4S] cluster site is built by Cys-24 and Cys-28. Residue Tyr-30 coordinates S-adenosyl-L-methionine. A [4Fe-4S] cluster-binding site is contributed by Cys-31. Arg-71 is a GTP binding site. S-adenosyl-L-methionine is bound at residue Gly-75. Thr-102 serves as a coordination point for GTP. Ser-126 provides a ligand contact to S-adenosyl-L-methionine. Lys-163 serves as a coordination point for GTP. Met-197 lines the S-adenosyl-L-methionine pocket. Residues Cys-261 and Cys-264 each contribute to the [4Fe-4S] cluster site. 266–268 is a binding site for GTP; it reads RAR. Cys-278 lines the [4Fe-4S] cluster pocket.

The protein belongs to the radical SAM superfamily. MoaA family. Monomer and homodimer. [4Fe-4S] cluster serves as cofactor.

The catalysed reaction is GTP + AH2 + S-adenosyl-L-methionine = (8S)-3',8-cyclo-7,8-dihydroguanosine 5'-triphosphate + 5'-deoxyadenosine + L-methionine + A + H(+). The protein operates within cofactor biosynthesis; molybdopterin biosynthesis. Catalyzes the cyclization of GTP to (8S)-3',8-cyclo-7,8-dihydroguanosine 5'-triphosphate. This is GTP 3',8-cyclase from Staphylococcus aureus (strain USA300).